A 282-amino-acid chain; its full sequence is Bifunctional protein FolD (282 aa).

NADP(+) contacts are provided by residues 164–166 (GRS) and serine 189.

This sequence belongs to the tetrahydrofolate dehydrogenase/cyclohydrolase family. Homodimer.

The catalysed reaction is (6R)-5,10-methylene-5,6,7,8-tetrahydrofolate + NADP(+) = (6R)-5,10-methenyltetrahydrofolate + NADPH. The enzyme catalyses (6R)-5,10-methenyltetrahydrofolate + H2O = (6R)-10-formyltetrahydrofolate + H(+). The protein operates within one-carbon metabolism; tetrahydrofolate interconversion. Its function is as follows. Catalyzes the oxidation of 5,10-methylenetetrahydrofolate to 5,10-methenyltetrahydrofolate and then the hydrolysis of 5,10-methenyltetrahydrofolate to 10-formyltetrahydrofolate. The chain is Bifunctional protein FolD from Lactobacillus helveticus (strain DPC 4571).